The primary structure comprises 304 residues: MRFGGVVSLVLGFIVSVLAGPLHPRAASSTQQPVDVTYKIEPFTQAAGLVQQTYCSPSSYEPGLQLGDATFLWRIGDGDQRQRVNLYHSESLGIAVAIQGTNGSSTRSILNDFQYNPFDPDERYSQYYPKGAKIMNGFQIAYVKLVDDIFRALKKYKREKNESRVTVIGHSQGAAIGLLAAMDIELRLDGGLFRSYLFGLPRVGNPTFASFVDRTIGHKLRWAINGRDWVPTVPIHIYGYQHPSNYIWIYPGNSTNWKLYPGQENVHGIPTVPRVFNNNDHQGIYFHTQIGGVDGECPARVGAH.

Positions 1–19 (MRFGGVVSLVLGFIVSVLA) are cleaved as a signal peptide. The cysteines at positions 55 and 297 are disulfide-linked. N-linked (GlcNAc...) asparagine glycans are attached at residues N102 and N161. The active-site Nucleophile is the S171. The active site involves D228. N-linked (GlcNAc...) asparagine glycosylation occurs at N253. Residue H281 is part of the active site.

This sequence belongs to the AB hydrolase superfamily. Lipase family. Class 3 subfamily.

The protein localises to the secreted. It localises to the cell wall. It carries out the reaction a monoacylglycerol + H2O = glycerol + a fatty acid + H(+). The catalysed reaction is a diacylglycerol + H2O = a monoacylglycerol + a fatty acid + H(+). Secreted lipase involved in Dandruff and seborrheic dermatitis (D/SD) probably via lipase-mediated breakdown of sebaceous lipids and release of irritating free fatty acids. Shows activity against monoglyceride and diglyceride substrates, but not triglyceride substrates and does not exhibit regio-selective production of diacylglycerols. Cleaves oleic acid from 1,2 isomers of diolein on both the 1 and the 2 position of the glycerol backbone, resulting mainly in free fatty acids but no monoolein is detected. Shows activity on monoolein and liberates mostly free fatty acids, but can also perform the reverse reaction and produce diolein. The protein is Secreted mono- and diacylglycerol lipase MDL4 of Malassezia globosa (strain ATCC MYA-4612 / CBS 7966) (Dandruff-associated fungus).